The chain runs to 388 residues: 3-dehydroquinate synthase (388 aa).

NAD(+)-binding positions include 85–90 (DGEQYK), 119–123 (GVIGD), 143–144 (TT), lysine 156, lysine 165, and 183–186 (TLKT). The Zn(2+) site is built by glutamate 198, histidine 261, and histidine 278.

The protein belongs to the sugar phosphate cyclases superfamily. Dehydroquinate synthase family. Requires Co(2+) as cofactor. Zn(2+) is required as a cofactor. NAD(+) serves as cofactor.

It localises to the cytoplasm. The catalysed reaction is 7-phospho-2-dehydro-3-deoxy-D-arabino-heptonate = 3-dehydroquinate + phosphate. Its pathway is metabolic intermediate biosynthesis; chorismate biosynthesis; chorismate from D-erythrose 4-phosphate and phosphoenolpyruvate: step 2/7. Functionally, catalyzes the conversion of 3-deoxy-D-arabino-heptulosonate 7-phosphate (DAHP) to dehydroquinate (DHQ). This Psychrobacter arcticus (strain DSM 17307 / VKM B-2377 / 273-4) protein is 3-dehydroquinate synthase.